Consider the following 159-residue polypeptide: Probable acetolactate synthase small subunit (159 aa).

In terms of domain architecture, ACT spans 4–78 (TIAVLVENKP…ETIKVSEITE (75 aa)).

It belongs to the acetolactate synthase small subunit family. As to quaternary structure, dimer of large and small chains.

The enzyme catalyses 2 pyruvate + H(+) = (2S)-2-acetolactate + CO2. It functions in the pathway amino-acid biosynthesis; L-isoleucine biosynthesis; L-isoleucine from 2-oxobutanoate: step 1/4. Its pathway is amino-acid biosynthesis; L-valine biosynthesis; L-valine from pyruvate: step 1/4. The sequence is that of Probable acetolactate synthase small subunit (ilvH) from Archaeoglobus fulgidus (strain ATCC 49558 / DSM 4304 / JCM 9628 / NBRC 100126 / VC-16).